An 89-amino-acid polypeptide reads, in one-letter code: Cell division protein FtsL (89 aa).

Residues 1–6 lie on the Cytoplasmic side of the membrane; sequence MAMNKL. A helical transmembrane segment spans residues 7 to 24; the sequence is NFLLLLAVCVSAFSVVMQ. The Periplasmic portion of the chain corresponds to 25–89; sequence QNQYRLNFTA…GNTFMVEHQR (65 aa). The stretch at 33–73 forms a coiled coil; the sequence is TALDKAKKQEIALEQDYAQMRLQQARLANHEAIRAAAEKQN.

It belongs to the FtsL family. Part of a complex composed of FtsB, FtsL and FtsQ.

The protein localises to the cell inner membrane. Essential cell division protein. May link together the upstream cell division proteins, which are predominantly cytoplasmic, with the downstream cell division proteins, which are predominantly periplasmic. The chain is Cell division protein FtsL from Neisseria meningitidis serogroup B (strain ATCC BAA-335 / MC58).